The following is a 228-amino-acid chain: U1 small nuclear ribonucleoprotein C (228 aa).

Residues 11-43 (ATVDYCDIFLTHDSASVRKAHNTGWKHKMQVEH) form a Matrin-type; degenerate zinc finger. Residues 83 to 127 (GQRGQPVGGPPRPPQPFHNGGRPGPPGRPPMGMFPPQRPMMPPPH) are disordered. The span at 105–127 (PGPPGRPPMGMFPPQRPMMPPPH) shows a compositional bias: pro residues.

Belongs to the U1 small nuclear ribonucleoprotein C family. As to quaternary structure, U1 snRNP is composed of the 7 core Sm proteins B/B', D1, D2, D3, E, F and G that assemble in a heptameric protein ring on the Sm site of the small nuclear RNA to form the core snRNP, and at least 3 U1 snRNP-specific proteins U1-70K, U1-A and U1-C. U1-C interacts with U1 snRNA and the 5' splice-site region of the pre-mRNA.

The protein resides in the nucleus. Its function is as follows. Component of the spliceosomal U1 snRNP, which is essential for recognition of the pre-mRNA 5' splice-site and the subsequent assembly of the spliceosome. U1-C is directly involved in initial 5' splice-site recognition for both constitutive and regulated alternative splicing. The interaction with the 5' splice-site seems to precede base-pairing between the pre-mRNA and the U1 snRNA. Stimulates commitment or early (E) complex formation by stabilizing the base pairing of the 5' end of the U1 snRNA and the 5' splice-site region. This Batrachochytrium dendrobatidis (strain JAM81 / FGSC 10211) (Frog chytrid fungus) protein is U1 small nuclear ribonucleoprotein C.